Consider the following 394-residue polypeptide: Flap endonuclease 1 (394 aa).

An N-domain region spans residues Met1 to Lys104. Asp34 is a binding site for Mg(2+). DNA-binding residues include Arg47 and Arg70. Mg(2+) contacts are provided by Asp86, Glu158, Glu160, Asp179, and Asp181. Positions Asp122–His253 are I-domain. Glu158 lines the DNA pocket. DNA contacts are provided by Gly231 and Asp233. Mg(2+) is bound at residue Asp233. An interaction with PCNA region spans residues Gln340–Phe348. Positions Gln358–Ala394 are disordered. Residues Lys374–Ala394 are compositionally biased toward basic residues.

The protein belongs to the XPG/RAD2 endonuclease family. FEN1 subfamily. As to quaternary structure, interacts with PCNA. Three molecules of FEN1 bind to one PCNA trimer with each molecule binding to one PCNA monomer. PCNA stimulates the nuclease activity without altering cleavage specificity. The cofactor is Mg(2+). In terms of processing, phosphorylated. Phosphorylation upon DNA damage induces relocalization to the nuclear plasma.

The protein resides in the nucleus. It localises to the nucleolus. Its subcellular location is the nucleoplasm. The protein localises to the mitochondrion. Functionally, structure-specific nuclease with 5'-flap endonuclease and 5'-3' exonuclease activities involved in DNA replication and repair. During DNA replication, cleaves the 5'-overhanging flap structure that is generated by displacement synthesis when DNA polymerase encounters the 5'-end of a downstream Okazaki fragment. It enters the flap from the 5'-end and then tracks to cleave the flap base, leaving a nick for ligation. Also involved in the long patch base excision repair (LP-BER) pathway, by cleaving within the apurinic/apyrimidinic (AP) site-terminated flap. Acts as a genome stabilization factor that prevents flaps from equilibrating into structures that lead to duplications and deletions. Also possesses 5'-3' exonuclease activity on nicked or gapped double-stranded DNA, and exhibits RNase H activity. Also involved in replication and repair of rDNA and in repairing mitochondrial DNA. This Pyricularia oryzae (strain 70-15 / ATCC MYA-4617 / FGSC 8958) (Rice blast fungus) protein is Flap endonuclease 1.